The sequence spans 75 residues: MAPEVLPKPQMRGLLAKRLRFHMVTAFVLSLGVAALYKFRVADKRKKAYADFYRNYDAMKDFEEMRKAGIFQSVK.

Residues 1–13 are Mitochondrial matrix-facing; the sequence is MAPEVLPKPQMRG. A helical transmembrane segment spans residues 14–54; the sequence is LLAKRLRFHMVTAFVLSLGVAALYKFRVADKRKKAYADFYR. The Mitochondrial intermembrane segment spans residues 55–75; the sequence is NYDAMKDFEEMRKAGIFQSVK.

Belongs to the cytochrome c oxidase subunit 6c family. As to quaternary structure, component of the cytochrome c oxidase (complex IV, CIV), a multisubunit enzyme composed of 14 subunits. The complex is composed of a catalytic core of 3 subunits MT-CO1, MT-CO2 and MT-CO3, encoded in the mitochondrial DNA, and 11 supernumerary subunits COX4I, COX5A, COX5B, COX6A, COX6B, COX6C, COX7A, COX7B, COX7C, COX8 and NDUFA4, which are encoded in the nuclear genome. The complex exists as a monomer or a dimer and forms supercomplexes (SCs) in the inner mitochondrial membrane with NADH-ubiquinone oxidoreductase (complex I, CI) and ubiquinol-cytochrome c oxidoreductase (cytochrome b-c1 complex, complex III, CIII), resulting in different assemblies (supercomplex SCI(1)III(2)IV(1) and megacomplex MCI(2)III(2)IV(2)).

The protein resides in the mitochondrion inner membrane. It functions in the pathway energy metabolism; oxidative phosphorylation. Functionally, component of the cytochrome c oxidase, the last enzyme in the mitochondrial electron transport chain which drives oxidative phosphorylation. The respiratory chain contains 3 multisubunit complexes succinate dehydrogenase (complex II, CII), ubiquinol-cytochrome c oxidoreductase (cytochrome b-c1 complex, complex III, CIII) and cytochrome c oxidase (complex IV, CIV), that cooperate to transfer electrons derived from NADH and succinate to molecular oxygen, creating an electrochemical gradient over the inner membrane that drives transmembrane transport and the ATP synthase. Cytochrome c oxidase is the component of the respiratory chain that catalyzes the reduction of oxygen to water. Electrons originating from reduced cytochrome c in the intermembrane space (IMS) are transferred via the dinuclear copper A center (CU(A)) of subunit 2 and heme A of subunit 1 to the active site in subunit 1, a binuclear center (BNC) formed by heme A3 and copper B (CU(B)). The BNC reduces molecular oxygen to 2 water molecules using 4 electrons from cytochrome c in the IMS and 4 protons from the mitochondrial matrix. This Trachypithecus cristatus (Silvered leaf-monkey) protein is Cytochrome c oxidase subunit 6C (COX6C).